The chain runs to 214 residues: Large ribosomal subunit protein uL4 (214 aa).

The interval R43–F83 is disordered.

This sequence belongs to the universal ribosomal protein uL4 family. As to quaternary structure, part of the 50S ribosomal subunit.

In terms of biological role, one of the primary rRNA binding proteins, this protein initially binds near the 5'-end of the 23S rRNA. It is important during the early stages of 50S assembly. It makes multiple contacts with different domains of the 23S rRNA in the assembled 50S subunit and ribosome. Its function is as follows. Forms part of the polypeptide exit tunnel. In Hyphomonas neptunium (strain ATCC 15444), this protein is Large ribosomal subunit protein uL4.